Here is an 89-residue protein sequence, read N- to C-terminus: Defensin-like protein 147 (89 aa).

The first 24 residues, 1-24, serve as a signal peptide directing secretion; sequence MKKIFQLSFTVFIIFISLVLGVVG. 4 cysteine pairs are disulfide-bonded: Cys34-Cys82, Cys46-Cys66, Cys51-Cys79, and Cys55-Cys81.

It belongs to the DEFL family. As to expression, expressed in flower buds, but not in stems, roots or rosette leaves.

It localises to the secreted. This is Defensin-like protein 147 (LCR1) from Arabidopsis thaliana (Mouse-ear cress).